Consider the following 280-residue polypeptide: Bifunctional protein FolD (280 aa).

NADP(+)-binding positions include Gly-166–Ser-168 and Ser-191.

Belongs to the tetrahydrofolate dehydrogenase/cyclohydrolase family. Homodimer.

The catalysed reaction is (6R)-5,10-methylene-5,6,7,8-tetrahydrofolate + NADP(+) = (6R)-5,10-methenyltetrahydrofolate + NADPH. It carries out the reaction (6R)-5,10-methenyltetrahydrofolate + H2O = (6R)-10-formyltetrahydrofolate + H(+). Its pathway is one-carbon metabolism; tetrahydrofolate interconversion. Functionally, catalyzes the oxidation of 5,10-methylenetetrahydrofolate to 5,10-methenyltetrahydrofolate and then the hydrolysis of 5,10-methenyltetrahydrofolate to 10-formyltetrahydrofolate. The polypeptide is Bifunctional protein FolD (Saccharophagus degradans (strain 2-40 / ATCC 43961 / DSM 17024)).